The following is a 207-amino-acid chain: MARYIGPKAKLSRREGTDLFLKSARRSLADKCKLDSKPGQHGRTSGARTSDYGTQLREKQKVKRIYGVLERQFRRYFAEADRRKGNTGENLLQLLESRLDNVVYRMGFGSTRAEARQLVSHKSITVNGVVANVPSQQVKAGDVVAIREKAKKQARIVEALSLAEQGGMPSWVAVDAKKFEGTFKQMPERAEIAGDINESLIVELYSR.

Residues 31-55 (KCKLDSKPGQHGRTSGARTSDYGTQ) are disordered. The segment covering 42 to 53 (GRTSGARTSDYG) has biased composition (polar residues). In terms of domain architecture, S4 RNA-binding spans 97-160 (SRLDNVVYRM…KKQARIVEAL (64 aa)).

The protein belongs to the universal ribosomal protein uS4 family. In terms of assembly, part of the 30S ribosomal subunit. Contacts protein S5. The interaction surface between S4 and S5 is involved in control of translational fidelity.

In terms of biological role, one of the primary rRNA binding proteins, it binds directly to 16S rRNA where it nucleates assembly of the body of the 30S subunit. Functionally, with S5 and S12 plays an important role in translational accuracy. The chain is Small ribosomal subunit protein uS4 from Burkholderia orbicola (strain MC0-3).